A 449-amino-acid polypeptide reads, in one-letter code: Tubulin alpha-B chain (449 aa).

8 residues coordinate GTP: Gln-11, Glu-71, Ser-140, Gly-144, Thr-145, Thr-179, Asn-206, and Asn-228. Glu-71 serves as a coordination point for Mg(2+). Glu-254 is an active-site residue.

It belongs to the tubulin family. As to quaternary structure, dimer of alpha and beta chains. A typical microtubule is a hollow water-filled tube with an outer diameter of 25 nm and an inner diameter of 15 nM. Alpha-beta heterodimers associate head-to-tail to form protofilaments running lengthwise along the microtubule wall with the beta-tubulin subunit facing the microtubule plus end conferring a structural polarity. Microtubules usually have 13 protofilaments but different protofilament numbers can be found in some organisms and specialized cells. The cofactor is Mg(2+).

Its subcellular location is the cytoplasm. It localises to the cytoskeleton. The enzyme catalyses GTP + H2O = GDP + phosphate + H(+). Its function is as follows. Tubulin is the major constituent of microtubules, a cylinder consisting of laterally associated linear protofilaments composed of alpha- and beta-tubulin heterodimers. Microtubules grow by the addition of GTP-tubulin dimers to the microtubule end, where a stabilizing cap forms. Below the cap, tubulin dimers are in GDP-bound state, owing to GTPase activity of alpha-tubulin. The sequence is that of Tubulin alpha-B chain (tba-2) from Neurospora crassa (strain ATCC 24698 / 74-OR23-1A / CBS 708.71 / DSM 1257 / FGSC 987).